The primary structure comprises 1347 residues: Neurofascin (1347 aa).

The N-terminal stretch at 1–24 (MARQPPPPWVHAAFLLCLLSLGGA) is a signal peptide. The Extracellular portion of the chain corresponds to 25 to 1217 (IEIPMDPSIQ…NQADIATQGW (1193 aa)). 6 Ig-like C2-type domains span residues 41–137 (PTIT…LQVS), 143–230 (PKEN…NPFT), 244–332 (PSFM…ISVR), 337–424 (PYWL…AFVS), 429–517 (PPRM…VRLE), and 521–603 (PTRI…QDLA). 4 cysteine pairs are disulfide-bonded: Cys63-Cys118, Cys162-Cys213, Cys268-Cys316, and Cys358-Cys408. The N-linked (GlcNAc...) asparagine glycan is linked to Asn305. Residues Asn409 and Asn446 are each glycosylated (N-linked (GlcNAc...) asparagine). 2 cysteine pairs are disulfide-bonded: Cys452–Cys501 and Cys543–Cys592. Tyr481 carries the post-translational modification Phosphotyrosine. The N-linked (GlcNAc...) asparagine glycan is linked to Asn483. Position 485 is a phosphoserine (Ser485). Fibronectin type-III domains lie at 630–725 (RPRD…TSGA), 730–823 (NPGD…SGED), 828–930 (APTE…TPEG), and 934–1030 (APRR…PNEA). A disordered region spans residues 713–740 (PSLPSERYRTSGAPPESNPGDVKGEGTR). Asn752 and Asn778 each carry an N-linked (GlcNAc...) asparagine glycan. Positions 915-934 (GDGPRSETKEFTTPEGVPSA) are disordered. The span at 916-926 (DGPRSETKEFT) shows a compositional bias: basic and acidic residues. Asn973 and Asn988 each carry an N-linked (GlcNAc...) asparagine glycan. Disordered regions lie at residues 1011–1040 (TQVGSGEAVTEESPAPPNEATPTAAPPTLP) and 1090–1111 (TTAAATTTTESPPTTTSGTKIH). Residues 1024–1040 (PAPPNEATPTAAPPTLP) show a composition bias toward pro residues. Residues 1090-1105 (TTAAATTTTESPPTTT) are compositionally biased toward low complexity. In terms of domain architecture, Fibronectin type-III 5 spans 1114–1206 (APDEQSIWNV…ITFMTSTAYT (93 aa)). A helical transmembrane segment spans residues 1218 to 1238 (FIGLMCAIALLVLILLIVCFI). The Cytoplasmic portion of the chain corresponds to 1239–1347 (KRSRGGKYPV…SPVNAIYSLA (109 aa)). A disordered region spans residues 1248 to 1347 (VREKKDVPLG…SPVNAIYSLA (100 aa)). Acidic residues predominate over residues 1261–1272 (PKEEDGSFDYSD). Ser1267, Ser1281, Ser1294, Ser1297, Ser1333, Ser1334, and Ser1338 each carry phosphoserine. Residues 1278–1291 (LQGSQTSLDGTIKQ) show a composition bias toward polar residues.

The protein belongs to the immunoglobulin superfamily. L1/neurofascin/NgCAM family. In terms of assembly, horseshoe-shaped homodimer. Probable constituent of a NFASC/NRCAM/ankyrin-G complex. Associates with the sodium channel beta-1 (SCN1B) and beta-3 (SCN3B) subunits. Interacts with GLDN/gliomedin. Interacts with MYOC.

It localises to the cell membrane. It is found in the cell junction. Its subcellular location is the paranodal septate junction. In terms of biological role, cell adhesion, ankyrin-binding protein which may be involved in neurite extension, axonal guidance, synaptogenesis, myelination and neuron-glial cell interactions. This chain is Neurofascin (NFASC), found in Homo sapiens (Human).